The primary structure comprises 736 residues: Polyribonucleotide nucleotidyltransferase (736 aa).

Mg(2+) contacts are provided by Asp493 and Asp499. A KH domain is found at 560 to 619; sequence PQHAELVVNPDAIRMIIGPGGKNIKQITTVTGAAIDINDSGKISIFAPTSEAMEQAKQMI. The S1 motif domain maps to 629 to 703; sequence GKNYKGKVRK…SRKAVLLEEE (75 aa). Residues 710 to 736 are disordered; that stretch reads EESSRFSKGNRNGDRSRHNNRERTRRT. Positions 720–736 are enriched in basic and acidic residues; the sequence is RNGDRSRHNNRERTRRT.

This sequence belongs to the polyribonucleotide nucleotidyltransferase family. The cofactor is Mg(2+).

The protein resides in the cytoplasm. The enzyme catalyses RNA(n+1) + phosphate = RNA(n) + a ribonucleoside 5'-diphosphate. In terms of biological role, involved in mRNA degradation. Catalyzes the phosphorolysis of single-stranded polyribonucleotides processively in the 3'- to 5'-direction. The chain is Polyribonucleotide nucleotidyltransferase from Lawsonia intracellularis (strain PHE/MN1-00).